A 411-amino-acid chain; its full sequence is Lissencephaly-1 homolog (411 aa).

In terms of domain architecture, LisH spans 9-41 (QREELNQAIADYLGSNGYADSLEAFRKEADLST). Residues 56–83 (TSVIRLQKKVMELEAKLTEAEKEVIEGA) are a coiled coil. 7 WD repeats span residues 106-147 (GHRA…RSLK), 148-187 (GHTD…ECVK), 191-230 (GHDH…CVKT), 233-272 (GHRE…CKVE), 275-334 (DHEH…CLFT), 337-376 (GHDN…CMKT), and 379-411 (AHQH…WECR).

The protein belongs to the WD repeat LIS1/nudF family.

The protein resides in the cytoplasm. Its subcellular location is the cytoskeleton. It is found in the microtubule organizing center. It localises to the centrosome. Its function is as follows. Positively regulates the activity of the minus-end directed microtubule motor protein dynein. May enhance dynein-mediated microtubule sliding by targeting dynein to the microtubule plus end. Required for several dynein- and microtubule-dependent processes. The chain is Lissencephaly-1 homolog from Drosophila ananassae (Fruit fly).